Here is a 354-residue protein sequence, read N- to C-terminus: cAMP-dependent protein kinase catalytic subunit 2 (354 aa).

The region spanning 45–301 (YITRAVLGNG…SSDVKSHPWF (257 aa)) is the Protein kinase domain. Residues 51 to 59 (LGNGSFGTV) and lysine 74 each bind ATP. Catalysis depends on aspartate 168, which acts as the Proton acceptor. Positions 302-354 (QGVDWFGILNQEVTAPYQPTISGAEDLSNFENFEFKDRYKSRINRHPELFANF) constitute an AGC-kinase C-terminal domain.

Belongs to the protein kinase superfamily. AGC Ser/Thr protein kinase family. cAMP subfamily. As to expression, more abundant in adult body than adult head.

It carries out the reaction L-seryl-[protein] + ATP = O-phospho-L-seryl-[protein] + ADP + H(+). It catalyses the reaction L-threonyl-[protein] + ATP = O-phospho-L-threonyl-[protein] + ADP + H(+). The chain is cAMP-dependent protein kinase catalytic subunit 2 (Pka-C2) from Drosophila melanogaster (Fruit fly).